A 73-amino-acid chain; its full sequence is MQVLVRDNNVDQAMKALKKKLQREGVFREMKLRNFYEKPSEKRAREKAEAIRRARKLARKRAQREAGIVTAKK.

Belongs to the bacterial ribosomal protein bS21 family.

The chain is Small ribosomal subunit protein bS21 from Parvibaculum lavamentivorans (strain DS-1 / DSM 13023 / NCIMB 13966).